The following is a 371-amino-acid chain: E3 ubiquitin-protein ligase RHF1A (371 aa).

The RING-type; atypical zinc-finger motif lies at 46–87; it reads CSICLEPFTLQDPSTVTSCKHEYHLQCIIEWSQRSKECPICW. Disordered regions lie at residues 199–254 and 348–371; these read HQNS…SSLP and EANSKSNNNGDKTEPQKLQGGETC. The span at 200 to 225 shows a compositional bias: polar residues; that stretch reads QNSNPCPSPGSMTPSPVSGHSSIPAD. Residues 226–252 are compositionally biased toward low complexity; the sequence is SNNGSRISPGPSPSRSSQSPKSPEASS.

In terms of assembly, interacts with KRP6. In terms of tissue distribution, expressed in stems, flowers, green siliques, cauline leaves, seeds and roots.

The catalysed reaction is S-ubiquitinyl-[E2 ubiquitin-conjugating enzyme]-L-cysteine + [acceptor protein]-L-lysine = [E2 ubiquitin-conjugating enzyme]-L-cysteine + N(6)-ubiquitinyl-[acceptor protein]-L-lysine.. It functions in the pathway protein modification; protein ubiquitination. Functionally, E3 ubiquitin-protein ligase involved in the positive regulation of the gametogenesis progression. Mediates the proteasomal degradation of KRP6, a cyclin-dependent kinase inhibitor which accumulates during meiosis and blocks the progression of subsequent mitoses during gametophyte development. Functions in association with RHF2A. Possesses E3 ubiquitin-protein ligase activity when associated with the E2 enzyme UBC8 in vitro. This chain is E3 ubiquitin-protein ligase RHF1A, found in Arabidopsis thaliana (Mouse-ear cress).